The sequence spans 99 residues: Malonate decarboxylase acyl carrier protein (99 aa).

Ser25 bears the O-(phosphoribosyl dephospho-coenzyme A)serine mark.

This sequence belongs to the MdcC family. Post-translationally, covalently binds the prosthetic group of malonate decarboxylase.

Its subcellular location is the cytoplasm. In terms of biological role, subunit of malonate decarboxylase, it is an acyl carrier protein to which acetyl and malonyl thioester residues are bound via a 2'-(5''-phosphoribosyl)-3'-dephospho-CoA prosthetic group and turn over during the catalytic mechanism. The chain is Malonate decarboxylase acyl carrier protein from Pseudomonas syringae pv. tomato (strain ATCC BAA-871 / DC3000).